A 472-amino-acid polypeptide reads, in one-letter code: Carboxypeptidase Q (472 aa).

The signal sequence occupies residues 1–20 (MKFLIFAFFGGVHLLSLCSG). Positions 21–44 (KAICKNGISKRTFEEIKEEIASCG) are excised as a propeptide. N-linked (GlcNAc...) asparagine glycans are attached at residues Asn61 and Asn179. His290 and Asp302 together coordinate Zn(2+). Glu336 acts as the Nucleophile in catalysis. Glu337 provides a ligand contact to Zn(2+). N-linked (GlcNAc...) asparagine glycosylation is found at Asn353 and Asn356. Asp364 provides a ligand contact to Zn(2+). Residue Asn396 is glycosylated (N-linked (GlcNAc...) asparagine). His434 provides a ligand contact to Zn(2+).

Belongs to the peptidase M28 family. As to quaternary structure, homodimer. The monomeric form is inactive while the homodimer is active. In terms of processing, N-glycosylated. The secreted form is modified by hybrid or complex type oligosaccharide chains. In terms of tissue distribution, mainly detected in blood plasma. Abundant in placenta and kidney. Present at low level in muscles, liver and skin fibroblasts. Not detected in brain or white blood cells (at protein level).

Its subcellular location is the endoplasmic reticulum. It is found in the golgi apparatus. The protein resides in the lysosome. It localises to the secreted. Carboxypeptidase that may play an important role in the hydrolysis of circulating peptides. Catalyzes the hydrolysis of dipeptides with unsubstituted terminals into amino acids. May play a role in the liberation of thyroxine hormone from its thyroglobulin (Tg) precursor. The sequence is that of Carboxypeptidase Q (CPQ) from Homo sapiens (Human).